The chain runs to 20 residues: U27-ctenitoxin-Pn1a (20 aa).

Positions 1 to 20 are disordered; sequence LAKRADICQPGKTSQRACET. A compositionally biased stretch (polar residues) spans 11–20; it reads GKTSQRACET.

In terms of processing, contains 4 disulfide bonds. Expressed by the venom gland.

Its subcellular location is the secreted. Functionally, has a vascular smooth muscle contracting activity. Causes short-lived contractions of both arterial and venous rabbit vessels. The protein is U27-ctenitoxin-Pn1a of Phoneutria nigriventer (Brazilian armed spider).